Reading from the N-terminus, the 66-residue chain is Large ribosomal subunit protein bL33c (66 aa).

The protein belongs to the bacterial ribosomal protein bL33 family.

It localises to the plastid. The protein localises to the chloroplast. The polypeptide is Large ribosomal subunit protein bL33c (Coffea arabica (Arabian coffee)).